The chain runs to 245 residues: Cytochrome c oxidase subunit 2 (245 aa).

Residues 1–36 (MYMLNNMLNDVPTPWGMFFQDSATPNMEGMMELHNN) lie on the Mitochondrial intermembrane side of the membrane. The helical transmembrane segment at 37–56 (VMFYLCMMLGFVSYMLYNML) threads the bilayer. The Mitochondrial matrix portion of the chain corresponds to 57-76 (TTYNHSVLPYKYLYHGQFIE). A helical membrane pass occupies residues 77–101 (IVWTTFPAMILLIIAFPSFILLYIC). At 102 to 245 (DEVIAPAMTI…GEFLAWIDEQ (144 aa)) the chain is on the mitochondrial intermembrane side. Positions 180, 215, 217, 219, 223, and 226 each coordinate Cu cation. Mg(2+) is bound at residue Glu217.

It belongs to the cytochrome c oxidase subunit 2 family. As to quaternary structure, component of the cytochrome c oxidase (complex IV, CIV), a multisubunit enzyme composed of a catalytic core of 3 subunits and several supernumerary subunits. The complex exists as a monomer or a dimer and forms supercomplexes (SCs) in the inner mitochondrial membrane with ubiquinol-cytochrome c oxidoreductase (cytochrome b-c1 complex, complex III, CIII). Requires Cu cation as cofactor.

Its subcellular location is the mitochondrion inner membrane. It catalyses the reaction 4 Fe(II)-[cytochrome c] + O2 + 8 H(+)(in) = 4 Fe(III)-[cytochrome c] + 2 H2O + 4 H(+)(out). In terms of biological role, component of the cytochrome c oxidase, the last enzyme in the mitochondrial electron transport chain which drives oxidative phosphorylation. The respiratory chain contains 3 multisubunit complexes succinate dehydrogenase (complex II, CII), ubiquinol-cytochrome c oxidoreductase (cytochrome b-c1 complex, complex III, CIII) and cytochrome c oxidase (complex IV, CIV), that cooperate to transfer electrons derived from NADH and succinate to molecular oxygen, creating an electrochemical gradient over the inner membrane that drives transmembrane transport and the ATP synthase. Cytochrome c oxidase is the component of the respiratory chain that catalyzes the reduction of oxygen to water. Electrons originating from reduced cytochrome c in the intermembrane space (IMS) are transferred via the dinuclear copper A center (CU(A)) of subunit 2 and heme A of subunit 1 to the active site in subunit 1, a binuclear center (BNC) formed by heme A3 and copper B (CU(B)). The BNC reduces molecular oxygen to 2 water molecules using 4 electrons from cytochrome c in the IMS and 4 protons from the mitochondrial matrix. This is Cytochrome c oxidase subunit 2 (COX2) from Dekkera bruxellensis (Brettanomyces custersii).